Here is a 1948-residue protein sequence, read N- to C-terminus: Receptor-type tyrosine-protein phosphatase S (1948 aa).

The first 29 residues, 1-29 (MAPTWGPGMVSVVGPMGLLVVLLVGGCAA), serve as a signal peptide directing secretion. The Extracellular segment spans residues 30 to 1282 (EEPPRFIKEP…PQPIVDGEEG (1253 aa)). 3 consecutive Ig-like C2-type domains span residues 33–123 (PRFI…AKLT), 135–233 (PNID…ANLY), and 245–327 (PRFS…AQIT). 2 cysteine pairs are disulfide-bonded: C54–C107 and C156–C216. The segment at 68 to 72 (KKGKK) is important for binding to glycosaminoglycan chains. N-linked (GlcNAc...) asparagine glycans are attached at residues N263 and N308. An intrachain disulfide couples C266 to C311. Fibronectin type-III domains lie at 334 to 424 (APGT…TGEQ), 429 to 523 (APRN…TQQG), 527 to 616 (QPMN…TLQS), 621 to 718 (PPQD…TDED), 723 to 831 (PPRK…TKGA), 832 to 930 (VLGR…TPRG), 931 to 1033 (HPQI…FLRD), and 1036 to 1120 (SPKN…TAFN). The disordered stretch occupies residues 700–724 (TEVGPGPESSPVVVRTDEDVPSAPP). Positions 701-713 (EVGPGPESSPVVV) are enriched in low complexity. An N-linked (GlcNAc...) asparagine glycan is attached at N733. A glycan (N-linked (GlcNAc...) asparagine) is linked at N940. The helical transmembrane segment at 1283–1303 (LIWVIGPVLAVVFIICIVIAI) threads the bilayer. Topologically, residues 1304–1948 (LLYKNKPDSK…YLGSFDHYAT (645 aa)) are cytoplasmic. Basic and acidic residues-rich tracts occupy residues 1311–1321 (DSKRKDSEPRT) and 1331–1340 (APHHPKDPVE). The tract at residues 1311-1340 (DSKRKDSEPRTKCLLNNADLAPHHPKDPVE) is disordered. Tyrosine-protein phosphatase domains are found at residues 1393–1648 (LSQE…LLEA) and 1680–1939 (MELE…ALEY). Residues D1557, 1589–1595 (CSAGVGR), and Q1633 each bind substrate. C1589 functions as the Phosphocysteine intermediate in the catalytic mechanism. C1880 (phosphocysteine intermediate) is an active-site residue.

It belongs to the protein-tyrosine phosphatase family. Receptor class 2A subfamily. As to quaternary structure, binding to large heparan sulfate proteoglycan structures promotes oligomerization. Binding to chondroitin sulfate proteoglycan does not lead to oligomerization. Interacts (via Ig-like domains) with NTRK3. Interacts (via Ig-like domains) with NTRK1, but does not form detectable complexes with NTRK2. Interacts with PPFIA1, PPFIA2 and PPFIA3. A cleavage occurs, separating the extracellular domain from the transmembrane segment. This process called 'ectodomain shedding' is thought to be involved in receptor desensitization, signal transduction and/or membrane localization. Detected in peripheral blood plasmacytoid dendritic cells (at protein level). Detected in all tissues tested except for placenta and liver. Detected in peripheral blood plasmacytoid dendritic cells.

Its subcellular location is the cell membrane. The protein localises to the cell projection. It localises to the axon. It is found in the perikaryon. The protein resides in the cytoplasmic vesicle. Its subcellular location is the secretory vesicle. The protein localises to the synaptic vesicle membrane. It localises to the synapse. It is found in the synaptosome. The protein resides in the postsynaptic density. Its subcellular location is the neuron projection. The protein localises to the growth cone. It catalyses the reaction O-phospho-L-tyrosyl-[protein] + H2O = L-tyrosyl-[protein] + phosphate. Cell surface receptor that binds to glycosaminoglycans, including chondroitin sulfate proteoglycans and heparan sulfate proteoglycan. Binding to chondroitin sulfate and heparan sulfate proteoglycans has opposite effects on PTPRS oligomerization and regulation of neurite outgrowth. Contributes to the inhibition of neurite and axonal outgrowth by chondroitin sulfate proteoglycans, also after nerve transection. Plays a role in stimulating neurite outgrowth in response to the heparan sulfate proteoglycan GPC2. Required for normal brain development, especially for normal development of the pituitary gland and the olfactory bulb. Functions as a tyrosine phosphatase. Mediates dephosphorylation of NTRK1, NTRK2 and NTRK3. Plays a role in down-regulation of signaling cascades that lead to the activation of Akt and MAP kinases. Down-regulates TLR9-mediated activation of NF-kappa-B, as well as production of TNF, interferon alpha and interferon beta. The polypeptide is Receptor-type tyrosine-protein phosphatase S (PTPRS) (Homo sapiens (Human)).